A 166-amino-acid chain; its full sequence is uncharacterized protein (166 aa).

Residues 28 to 55 (SRQVHPPWPVPCKSKLQEQDSSESKESK) form a disordered region. The span at 42–55 (KLQEQDSSESKESK) shows a compositional bias: basic and acidic residues. Residues 67 to 163 (QNAMLYIENN…NYTPKQFKRT (97 aa)) form the HTH araC/xylS-type domain. DNA-binding regions (H-T-H motif) lie at residues 84–105 (DTVA…KLAT) and 130–153 (VTET…KKRT).

This is an uncharacterized protein from Pseudoalteromonas carrageenovora (Alteromonas carrageenovora).